The primary structure comprises 200 residues: ATP synthase subunit delta', mitochondrial (200 aa).

The N-terminal 21 residues, 1–21 (MFRHSSRLLARATTMGWRRPF), are a transit peptide targeting the mitochondrion.

This sequence belongs to the ATPase epsilon chain family. As to quaternary structure, F-type ATPases have 2 components, CF(1) - the catalytic core - and CF(0) - the membrane proton channel. CF(1) has five subunits: alpha(3), beta(3), gamma(1), delta(1), epsilon(1). CF(0) has three main subunits: a, b and c.

It localises to the mitochondrion. The protein resides in the mitochondrion inner membrane. Its function is as follows. Mitochondrial membrane ATP synthase (F(1)F(0) ATP synthase or Complex V) produces ATP from ADP in the presence of a proton gradient across the membrane which is generated by electron transport complexes of the respiratory chain. F-type ATPases consist of two structural domains, F(1) - containing the extramembraneous catalytic core, and F(0) - containing the membrane proton channel, linked together by a central stalk and a peripheral stalk. During catalysis, ATP turnover in the catalytic domain of F(1) is coupled via a rotary mechanism of the central stalk subunits to proton translocation. Part of the complex F(1) domain and of the central stalk which is part of the complex rotary element. Rotation of the central stalk against the surrounding alpha(3)beta(3) subunits leads to hydrolysis of ATP in three separate catalytic sites on the beta subunits. This chain is ATP synthase subunit delta', mitochondrial, found in Ipomoea batatas (Sweet potato).